A 510-amino-acid chain; its full sequence is NAD(P)H-quinone oxidoreductase subunit 2 B, chloroplastic (510 aa).

A run of 13 helical transmembrane segments spans residues 24 to 44 (LLLF…GLIL), 57 to 77 (IPWL…ALLF), 99 to 119 (IFQF…VEYI), 124 to 144 (MAIT…MFLC), 150 to 170 (ITIF…SGYT), 183 to 203 (YLLM…WLYG), 229 to 249 (ISIA…PAPF), 295 to 315 (WHLL…LVAI), 323 to 343 (MLAY…IVGD), 347 to 367 (GYAS…GTFA), 395 to 415 (ALSS…AGFF), 418 to 438 (LHLF…IGLL), and 484 to 504 (MIVC…IIAI).

It belongs to the complex I subunit 2 family. NDH is composed of at least 16 different subunits, 5 of which are encoded in the nucleus.

It is found in the plastid. It localises to the chloroplast thylakoid membrane. The catalysed reaction is a plastoquinone + NADH + (n+1) H(+)(in) = a plastoquinol + NAD(+) + n H(+)(out). It carries out the reaction a plastoquinone + NADPH + (n+1) H(+)(in) = a plastoquinol + NADP(+) + n H(+)(out). In terms of biological role, NDH shuttles electrons from NAD(P)H:plastoquinone, via FMN and iron-sulfur (Fe-S) centers, to quinones in the photosynthetic chain and possibly in a chloroplast respiratory chain. The immediate electron acceptor for the enzyme in this species is believed to be plastoquinone. Couples the redox reaction to proton translocation, and thus conserves the redox energy in a proton gradient. This chain is NAD(P)H-quinone oxidoreductase subunit 2 B, chloroplastic, found in Ceratophyllum demersum (Rigid hornwort).